Here is a 503-residue protein sequence, read N- to C-terminus: Aspartyl/glutamyl-tRNA(Asn/Gln) amidotransferase subunit B (503 aa).

It belongs to the GatB/GatE family. GatB subfamily. In terms of assembly, heterotrimer of A, B and C subunits.

It carries out the reaction L-glutamyl-tRNA(Gln) + L-glutamine + ATP + H2O = L-glutaminyl-tRNA(Gln) + L-glutamate + ADP + phosphate + H(+). The enzyme catalyses L-aspartyl-tRNA(Asn) + L-glutamine + ATP + H2O = L-asparaginyl-tRNA(Asn) + L-glutamate + ADP + phosphate + 2 H(+). Functionally, allows the formation of correctly charged Asn-tRNA(Asn) or Gln-tRNA(Gln) through the transamidation of misacylated Asp-tRNA(Asn) or Glu-tRNA(Gln) in organisms which lack either or both of asparaginyl-tRNA or glutaminyl-tRNA synthetases. The reaction takes place in the presence of glutamine and ATP through an activated phospho-Asp-tRNA(Asn) or phospho-Glu-tRNA(Gln). The chain is Aspartyl/glutamyl-tRNA(Asn/Gln) amidotransferase subunit B from Nocardia farcinica (strain IFM 10152).